A 98-amino-acid chain; its full sequence is Large ribosomal subunit protein uL23 (98 aa).

This sequence belongs to the universal ribosomal protein uL23 family. As to quaternary structure, part of the 50S ribosomal subunit. Contacts protein L29, and trigger factor when it is bound to the ribosome.

One of the early assembly proteins it binds 23S rRNA. One of the proteins that surrounds the polypeptide exit tunnel on the outside of the ribosome. Forms the main docking site for trigger factor binding to the ribosome. This chain is Large ribosomal subunit protein uL23, found in Parafrankia sp. (strain EAN1pec).